Consider the following 222-residue polypeptide: Superoxide dismutase [Mn], mitochondrial (222 aa).

A mitochondrion-targeting transit peptide spans 1–24; it reads MLSRAVCGTSRQLAPVLGYLGSRQ. Histidine 50 serves as a coordination point for Mn(2+). A 3'-nitrotyrosine modification is found at tyrosine 58. N6-acetyllysine; alternate is present on residues lysine 68 and lysine 75. N6-succinyllysine; alternate occurs at positions 68 and 75. Histidine 98 serves as a coordination point for Mn(2+). Lysine 114 carries the post-translational modification N6-acetyllysine. Residues lysine 122 and lysine 130 each carry the N6-acetyllysine; alternate modification. N6-succinyllysine; alternate occurs at positions 122 and 130. Aspartate 183 and histidine 187 together coordinate Mn(2+). An N6-acetyllysine modification is found at lysine 202.

It belongs to the iron/manganese superoxide dismutase family. As to quaternary structure, homotetramer. Mn(2+) serves as cofactor. In terms of processing, nitrated under oxidative stress. Nitration coupled with oxidation inhibits the catalytic activity. Acetylation at Lys-122 decreases enzymatic activity. Deacetylated by SIRT3 upon exposure to ionizing radiations or after long fasting. Post-translationally, polyubiquitinated; leading to proteasomal degradation. Deubiquitinated by USP36 which increases protein stability.

The protein resides in the mitochondrion matrix. It catalyses the reaction 2 superoxide + 2 H(+) = H2O2 + O2. Its function is as follows. Destroys superoxide anion radicals which are normally produced within the cells and which are toxic to biological systems. The polypeptide is Superoxide dismutase [Mn], mitochondrial (SOD2) (Homo sapiens (Human)).